The sequence spans 120 residues: NAD(P)H-quinone oxidoreductase subunit 3, chloroplastic (120 aa).

3 consecutive transmembrane segments (helical) span residues 10–30, 64–84, and 89–109; these read FWLF…ISKI, MFAL…PWAM, and LGIS…IGLI.

It belongs to the complex I subunit 3 family. As to quaternary structure, NDH is composed of at least 16 different subunits, 5 of which are encoded in the nucleus.

The protein localises to the plastid. It localises to the chloroplast thylakoid membrane. The enzyme catalyses a plastoquinone + NADH + (n+1) H(+)(in) = a plastoquinol + NAD(+) + n H(+)(out). It catalyses the reaction a plastoquinone + NADPH + (n+1) H(+)(in) = a plastoquinol + NADP(+) + n H(+)(out). NDH shuttles electrons from NAD(P)H:plastoquinone, via FMN and iron-sulfur (Fe-S) centers, to quinones in the photosynthetic chain and possibly in a chloroplast respiratory chain. The immediate electron acceptor for the enzyme in this species is believed to be plastoquinone. Couples the redox reaction to proton translocation, and thus conserves the redox energy in a proton gradient. In Angiopteris evecta (Mule's foot fern), this protein is NAD(P)H-quinone oxidoreductase subunit 3, chloroplastic.